The following is a 353-amino-acid chain: Photosystem II D2 protein (353 aa).

Thr2 carries the N-acetylthreonine modification. Residue Thr2 is modified to Phosphothreonine. The chain crosses the membrane as a helical span at residues 41 to 61 (CAYFALGGWFTGTTFVTSWYT). Residue His118 participates in chlorophyll a binding. A helical membrane pass occupies residues 125–141 (GFMLRQFELARSVQLRP). Pheophytin a is bound by residues Gln130 and Asn143. Residues 153–166 (VFVSVFLIYPLGQS) form a helical membrane-spanning segment. His198 serves as a coordination point for chlorophyll a. Residues 208–228 (AALLCAIHGATVENTLFEDGD) traverse the membrane as a helical segment. Positions 215 and 262 each coordinate a plastoquinone. His215 contributes to the Fe cation binding site. His269 is a Fe cation binding site. The chain crosses the membrane as a helical span at residues 279-295 (GLWMSAIGVVGLALNLR).

The protein belongs to the reaction center PufL/M/PsbA/D family. As to quaternary structure, PSII is composed of 1 copy each of membrane proteins PsbA, PsbB, PsbC, PsbD, PsbE, PsbF, PsbH, PsbI, PsbJ, PsbK, PsbL, PsbM, PsbT, PsbX, PsbY, PsbZ, Psb30/Ycf12, at least 3 peripheral proteins of the oxygen-evolving complex and a large number of cofactors. It forms dimeric complexes. The cofactor is The D1/D2 heterodimer binds P680, chlorophylls that are the primary electron donor of PSII, and subsequent electron acceptors. It shares a non-heme iron and each subunit binds pheophytin, quinone, additional chlorophylls, carotenoids and lipids. There is also a Cl(-1) ion associated with D1 and D2, which is required for oxygen evolution. The PSII complex binds additional chlorophylls, carotenoids and specific lipids..

The protein localises to the plastid. The protein resides in the chloroplast thylakoid membrane. It catalyses the reaction 2 a plastoquinone + 4 hnu + 2 H2O = 2 a plastoquinol + O2. Photosystem II (PSII) is a light-driven water:plastoquinone oxidoreductase that uses light energy to abstract electrons from H(2)O, generating O(2) and a proton gradient subsequently used for ATP formation. It consists of a core antenna complex that captures photons, and an electron transfer chain that converts photonic excitation into a charge separation. The D1/D2 (PsbA/PsbD) reaction center heterodimer binds P680, the primary electron donor of PSII as well as several subsequent electron acceptors. D2 is needed for assembly of a stable PSII complex. The chain is Photosystem II D2 protein from Oryza nivara (Indian wild rice).